A 198-amino-acid polypeptide reads, in one-letter code: Nucleoside triphosphate pyrophosphatase (198 aa).

Asp-72 serves as the catalytic Proton acceptor.

This sequence belongs to the Maf family. A divalent metal cation is required as a cofactor.

It is found in the cytoplasm. The catalysed reaction is a ribonucleoside 5'-triphosphate + H2O = a ribonucleoside 5'-phosphate + diphosphate + H(+). The enzyme catalyses a 2'-deoxyribonucleoside 5'-triphosphate + H2O = a 2'-deoxyribonucleoside 5'-phosphate + diphosphate + H(+). In terms of biological role, nucleoside triphosphate pyrophosphatase. May have a dual role in cell division arrest and in preventing the incorporation of modified nucleotides into cellular nucleic acids. The sequence is that of Nucleoside triphosphate pyrophosphatase from Corynebacterium aurimucosum (strain ATCC 700975 / DSM 44827 / CIP 107346 / CN-1) (Corynebacterium nigricans).